A 218-amino-acid polypeptide reads, in one-letter code: tRNA (guanine-N(7)-)-methyltransferase (218 aa).

A disordered region spans residues 1–25 (MRLKNKPWANELVEEHPESALDRPN). The span at 13-25 (VEEHPESALDRPN) shows a compositional bias: basic and acidic residues. Positions 45, 70, 97, and 119 each coordinate S-adenosyl-L-methionine. D119 is a catalytic residue. K123 lines the substrate pocket. Positions 125–130 (RHEKRR) are interaction with RNA. Residues D155 and 195-198 (TEYE) each bind substrate.

The protein belongs to the class I-like SAM-binding methyltransferase superfamily. TrmB family.

It carries out the reaction guanosine(46) in tRNA + S-adenosyl-L-methionine = N(7)-methylguanosine(46) in tRNA + S-adenosyl-L-homocysteine. The protein operates within tRNA modification; N(7)-methylguanine-tRNA biosynthesis. Catalyzes the formation of N(7)-methylguanine at position 46 (m7G46) in tRNA. The polypeptide is tRNA (guanine-N(7)-)-methyltransferase (Lactobacillus delbrueckii subsp. bulgaricus (strain ATCC BAA-365 / Lb-18)).